Here is a 259-residue protein sequence, read N- to C-terminus: Protein unc-50 homolog (259 aa).

Residues 1 to 15 show a composition bias toward polar residues; it reads MLPTSSPQIHRNGSL. A disordered region spans residues 1-22; sequence MLPTSSPQIHRNGSLSERDAAR. At 1 to 80 the chain is on the cytoplasmic side; that stretch reads MLPTSSPQIH…TKDQWARDDP (80 aa). A helical membrane pass occupies residues 81-101; sequence AFLVLLSIWLCVSTVGFGLVL. At 102–110 the chain is on the lumenal side; that stretch reads DMGFVETLT. Residues 111–131 form a helical membrane-spanning segment; it reads LLLWVVFIDCIGVGLLISTLM. Residues 132-162 lie on the Cytoplasmic side of the membrane; sequence WFVTNKYLMKHPNRDYDVEWGYAFDVHLNAF. Residues 163 to 183 traverse the membrane as a helical segment; sequence YPLLVILHFLQLFFINHVVVI. Residues 184-198 are Lumenal-facing; it reads SSDWFLGYFVGNTMW. Residues 199 to 219 form a helical membrane-spanning segment; it reads LIAIGYYVYITFLGYSALPFL. Residues 220-222 are Cytoplasmic-facing; the sequence is KNT. A helical membrane pass occupies residues 223–243; it reads VVLLYPFALLGLLYVLSISLG. The Lumenal segment spans residues 244 to 259; that stretch reads WNFTKGLCWFYKHRVQ.

It belongs to the unc-50 family.

The protein localises to the nucleus inner membrane. The protein resides in the golgi apparatus membrane. Its function is as follows. Involved in the cell surface expression of neuronal nicotinic receptors. Binds RNA. The chain is Protein unc-50 homolog (unc50) from Danio rerio (Zebrafish).